The following is a 260-amino-acid chain: Hydroxyethylthiazole kinase (260 aa).

Residue Met38 coordinates substrate. ATP is bound by residues Lys114 and Ser161. Residue Gly188 coordinates substrate.

The protein belongs to the Thz kinase family. Mg(2+) is required as a cofactor.

It carries out the reaction 5-(2-hydroxyethyl)-4-methylthiazole + ATP = 4-methyl-5-(2-phosphooxyethyl)-thiazole + ADP + H(+). It participates in cofactor biosynthesis; thiamine diphosphate biosynthesis; 4-methyl-5-(2-phosphoethyl)-thiazole from 5-(2-hydroxyethyl)-4-methylthiazole: step 1/1. Its function is as follows. Catalyzes the phosphorylation of the hydroxyl group of 4-methyl-5-beta-hydroxyethylthiazole (THZ). This is Hydroxyethylthiazole kinase from Campylobacter lari (strain RM2100 / D67 / ATCC BAA-1060).